A 95-amino-acid polypeptide reads, in one-letter code: FXYD domain-containing ion transport regulator 6 (95 aa).

The first 18 residues, 1-18 (MELVLVFLCSLLAPTVLA), serve as a signal peptide directing secretion. The Extracellular portion of the chain corresponds to 19-35 (SAAEKEKEMDPFHYDYQ). The helical transmembrane segment at 36-58 (TLRIGGLVFAVVLFSVGILLILS) threads the bilayer. Topologically, residues 59 to 95 (RRCKCSFNQKPRAPGDEEAQVENLITANATEPQKAEN) are cytoplasmic.

The protein belongs to the FXYD family. Regulatory subunit of the sodium/potassium-transporting ATPase which is composed of a catalytic alpha subunit, a non-catalytic beta subunit and an additional regulatory subunit. The regulatory subunit, a member of the FXYD protein family, modulates the enzymatic activity in a tissue- and isoform-specific way by changing affinities of the Na+/K+-ATPase toward Na(+), K(+) or ATP.

It is found in the cell membrane. In terms of biological role, associates with and regulates the activity of the sodium/potassium-transporting ATPase (NKA) which catalyzes the hydrolysis of ATP coupled with the exchange of Na(+) and K(+) ions across the plasma membrane. Reduces the apparent affinity for intracellular Na(+) with no change in the apparent affinity for extracellular K(+). In addition to modulating NKA kinetics, may also function as a regulator of NKA localization to the plasma membrane. In Pongo abelii (Sumatran orangutan), this protein is FXYD domain-containing ion transport regulator 6 (FXYD6).